A 142-amino-acid polypeptide reads, in one-letter code: Nucleoside diphosphate kinase (142 aa).

Residues lysine 11, phenylalanine 59, arginine 87, threonine 93, arginine 104, and asparagine 114 each coordinate ATP. Catalysis depends on histidine 117, which acts as the Pros-phosphohistidine intermediate.

Belongs to the NDK family. As to quaternary structure, homotetramer. The cofactor is Mg(2+).

Its subcellular location is the cytoplasm. It carries out the reaction dZDP + ATP = dZTP + ADP. It catalyses the reaction a 2'-deoxyribonucleoside 5'-diphosphate + ATP = a 2'-deoxyribonucleoside 5'-triphosphate + ADP. The enzyme catalyses a ribonucleoside 5'-diphosphate + ATP = a ribonucleoside 5'-triphosphate + ADP. It participates in purine metabolism. In terms of biological role, major role in the synthesis of nucleoside triphosphates other than ATP. The ATP gamma phosphate is transferred to the NDP beta phosphate via a ping-pong mechanism, using a phosphorylated active-site intermediate. Its function is as follows. (Microbial infection) Catalyzes the phosphorylation of dZDP to dZTP, when the bacterium is infected by a phage that produces the substrate for the synthesis of dZTP (2- amino-2'-deoxyadenosine 5'-triphosphate), which is then used by the phage as a DNA polymerase substrate. This chain is Nucleoside diphosphate kinase, found in Vibrio cholerae serotype O1 (strain ATCC 39315 / El Tor Inaba N16961).